The primary structure comprises 150 residues: Large ribosomal subunit protein uL15 (150 aa).

Positions 18-43 are disordered; the sequence is IVGRGSSSGWGKTSGKGHKGQQARSG.

Belongs to the universal ribosomal protein uL15 family. In terms of assembly, part of the 50S ribosomal subunit.

In terms of biological role, binds to the 23S rRNA. This chain is Large ribosomal subunit protein uL15, found in Treponema denticola (strain ATCC 35405 / DSM 14222 / CIP 103919 / JCM 8153 / KCTC 15104).